The sequence spans 225 residues: 3-dehydroquinate dehydratase (225 aa).

Residues Ser6, 30–32, and Arg62 contribute to the 3-dehydroquinate site; that span reads EWR. His118 acts as the Proton donor/acceptor in catalysis. Lys143 serves as the catalytic Schiff-base intermediate with substrate. 3 residues coordinate 3-dehydroquinate: Arg186, Ser205, and Gln209.

It belongs to the type-I 3-dehydroquinase family. Homodimer.

The catalysed reaction is 3-dehydroquinate = 3-dehydroshikimate + H2O. The protein operates within metabolic intermediate biosynthesis; chorismate biosynthesis; chorismate from D-erythrose 4-phosphate and phosphoenolpyruvate: step 3/7. Involved in the third step of the chorismate pathway, which leads to the biosynthesis of aromatic amino acids. Catalyzes the cis-dehydration of 3-dehydroquinate (DHQ) and introduces the first double bond of the aromatic ring to yield 3-dehydroshikimate. This Streptococcus pneumoniae (strain Taiwan19F-14) protein is 3-dehydroquinate dehydratase.